Here is a 245-residue protein sequence, read N- to C-terminus: Eukaryotic translation initiation factor 6 (245 aa).

S174 and S175 each carry phosphoserine; by CK1. Phosphoserine is present on S231.

It belongs to the eIF-6 family. As to quaternary structure, monomer. Associates with the 60S ribosomal subunit. Phosphorylation at Ser-174 and Ser-175 promotes nuclear export.

It is found in the cytoplasm. It localises to the nucleus. The protein localises to the nucleolus. In terms of biological role, binds to the 60S ribosomal subunit and prevents its association with the 40S ribosomal subunit to form the 80S initiation complex in the cytoplasm. Is also involved in ribosome biogenesis. Associates with pre-60S subunits in the nucleus and is involved in its nuclear export. Cytoplasmic release of TIF6 from 60S subunits and nuclear relocalization is promoted by the GTPase RIA1/EFL1 and by SDO1. Also required for pre-rRNA processing. This chain is Eukaryotic translation initiation factor 6, found in Saccharomyces cerevisiae (strain ATCC 204508 / S288c) (Baker's yeast).